The following is a 92-amino-acid chain: Small integral membrane protein 12 (92 aa).

The helical transmembrane segment at Tyr-15–Phe-34 threads the bilayer.

Belongs to the SMIM12 family.

It localises to the membrane. This is Small integral membrane protein 12 (Smim12) from Mus musculus (Mouse).